Reading from the N-terminus, the 271-residue chain is Dermonecrotic toxin LarSicTox-alphaIB1c (271 aa).

Histidine 3 is an active-site residue. Mg(2+) is bound by residues glutamate 23 and aspartate 25. Histidine 39 acts as the Nucleophile in catalysis. 2 disulfide bridges follow: cysteine 43–cysteine 49 and cysteine 45–cysteine 188. A Mg(2+)-binding site is contributed by aspartate 83. Asparagine 248 is a glycosylation site (N-linked (GlcNAc...) asparagine).

It belongs to the arthropod phospholipase D family. Class II subfamily. It depends on Mg(2+) as a cofactor. In terms of tissue distribution, expressed by the venom gland.

The protein localises to the secreted. The enzyme catalyses an N-(acyl)-sphingosylphosphocholine = an N-(acyl)-sphingosyl-1,3-cyclic phosphate + choline. It carries out the reaction an N-(acyl)-sphingosylphosphoethanolamine = an N-(acyl)-sphingosyl-1,3-cyclic phosphate + ethanolamine. The catalysed reaction is a 1-acyl-sn-glycero-3-phosphocholine = a 1-acyl-sn-glycero-2,3-cyclic phosphate + choline. It catalyses the reaction a 1-acyl-sn-glycero-3-phosphoethanolamine = a 1-acyl-sn-glycero-2,3-cyclic phosphate + ethanolamine. Functionally, dermonecrotic toxins cleave the phosphodiester linkage between the phosphate and headgroup of certain phospholipids (sphingolipid and lysolipid substrates), forming an alcohol (often choline) and a cyclic phosphate. This toxin acts on sphingomyelin (SM). It may also act on ceramide phosphoethanolamine (CPE), lysophosphatidylcholine (LPC) and lysophosphatidylethanolamine (LPE), but not on lysophosphatidylserine (LPS), and lysophosphatidylglycerol (LPG). It acts by transphosphatidylation, releasing exclusively cyclic phosphate products as second products. Induces dermonecrosis, hemolysis, increased vascular permeability, edema, inflammatory response, and platelet aggregation. The protein is Dermonecrotic toxin LarSicTox-alphaIB1c of Loxosceles arizonica (Arizona brown spider).